Consider the following 221-residue polypeptide: Enolase-phosphatase E1 (221 aa).

Belongs to the HAD-like hydrolase superfamily. MasA/MtnC family. In terms of assembly, monomer. It depends on Mg(2+) as a cofactor.

The enzyme catalyses 5-methylsulfanyl-2,3-dioxopentyl phosphate + H2O = 1,2-dihydroxy-5-(methylsulfanyl)pent-1-en-3-one + phosphate. The protein operates within amino-acid biosynthesis; L-methionine biosynthesis via salvage pathway; L-methionine from S-methyl-5-thio-alpha-D-ribose 1-phosphate: step 3/6. It participates in amino-acid biosynthesis; L-methionine biosynthesis via salvage pathway; L-methionine from S-methyl-5-thio-alpha-D-ribose 1-phosphate: step 4/6. Functionally, bifunctional enzyme that catalyzes the enolization of 2,3-diketo-5-methylthiopentyl-1-phosphate (DK-MTP-1-P) into the intermediate 2-hydroxy-3-keto-5-methylthiopentenyl-1-phosphate (HK-MTPenyl-1-P), which is then dephosphorylated to form the acireductone 1,2-dihydroxy-3-keto-5-methylthiopentene (DHK-MTPene). The chain is Enolase-phosphatase E1 from Xanthobacter autotrophicus (strain ATCC BAA-1158 / Py2).